A 760-amino-acid polypeptide reads, in one-letter code: Acetyl-CoA decarbonylase/synthase complex subunit alpha 1 (760 aa).

[4Fe-4S] cluster is bound by residues cysteine 56, cysteine 59, cysteine 60, cysteine 62, cysteine 67, and cysteine 77. Histidine 100 contributes to the CO binding site. 3 residues coordinate [Ni-4Fe-4S] cluster: histidine 231, cysteine 259, and cysteine 298. 2 4Fe-4S ferredoxin-type domains span residues 381 to 410 and 418 to 450; these read KKLQKEAKRCLGCGDCERVCPNDLPIVEAM and FEGLADLFDRCVGCARCESECPTKLRVMNMIED. Residues cysteine 390, cysteine 393, cysteine 396, cysteine 400, cysteine 428, cysteine 431, cysteine 434, and cysteine 438 each contribute to the [4Fe-4S] cluster site. [Ni-4Fe-4S] cluster contacts are provided by cysteine 496, cysteine 525, and cysteine 560.

Belongs to the Ni-containing carbon monoxide dehydrogenase family. Heterotetramer of two alpha and two epsilon subunits. The ACDS complex is made up of alpha, epsilon, beta, gamma and delta subunits with a probable stoichiometry of (alpha(2)epsilon(2))(4)-beta(8)-(gamma(1)delta(1))(8). It depends on [4Fe-4S] cluster as a cofactor. [Ni-4Fe-4S] cluster serves as cofactor.

The catalysed reaction is CO + 2 oxidized [2Fe-2S]-[ferredoxin] + H2O = 2 reduced [2Fe-2S]-[ferredoxin] + CO2 + 2 H(+). Part of the ACDS complex that catalyzes the reversible cleavage of acetyl-CoA, allowing autotrophic growth from CO(2). The alpha-epsilon subcomponent functions as a carbon monoxide dehydrogenase. This is Acetyl-CoA decarbonylase/synthase complex subunit alpha 1 from Methanopyrus kandleri (strain AV19 / DSM 6324 / JCM 9639 / NBRC 100938).